A 176-amino-acid chain; its full sequence is MSTKDPNRLPHEKGFHISWDQIHRDSRALAWRLDGLGPDDGHWRAVVAITRGGMAPAMIVARELDIRTVDTISVKSYHSGGGKADQRREAEVLKSPDADIMGDGTGILIVDDLVDSGKTLELVRTLYPKAHFATVYAKPQGEPQVDTFITGVSQDTWIFFPWDMALQYVEPYRGTD.

Residues R51–G52, R88, and D111–T119 contribute to the 5-phospho-alpha-D-ribose 1-diphosphate site. R88 is a GMP binding site. D112 serves as a coordination point for Mg(2+). D115 and I158 together coordinate guanine. Xanthine contacts are provided by D115 and I158. Residues D115 to T119 and W157 to I158 contribute to the GMP site.

This sequence belongs to the purine/pyrimidine phosphoribosyltransferase family. XGPT subfamily. In terms of assembly, homotetramer. The cofactor is Mg(2+).

The protein localises to the cell inner membrane. The catalysed reaction is GMP + diphosphate = guanine + 5-phospho-alpha-D-ribose 1-diphosphate. It carries out the reaction XMP + diphosphate = xanthine + 5-phospho-alpha-D-ribose 1-diphosphate. It catalyses the reaction IMP + diphosphate = hypoxanthine + 5-phospho-alpha-D-ribose 1-diphosphate. It functions in the pathway purine metabolism; GMP biosynthesis via salvage pathway; GMP from guanine: step 1/1. It participates in purine metabolism; XMP biosynthesis via salvage pathway; XMP from xanthine: step 1/1. Its function is as follows. Purine salvage pathway enzyme that catalyzes the transfer of the ribosyl-5-phosphate group from 5-phospho-alpha-D-ribose 1-diphosphate (PRPP) to the N9 position of the 6-oxopurines guanine and xanthine to form the corresponding ribonucleotides GMP (guanosine 5'-monophosphate) and XMP (xanthosine 5'-monophosphate), with the release of PPi. To a lesser extent, also acts on hypoxanthine. This chain is Xanthine-guanine phosphoribosyltransferase, found in Ruegeria sp. (strain TM1040) (Silicibacter sp.).